We begin with the raw amino-acid sequence, 20 residues long: Phenol-soluble modulin alpha 4 peptide (20 aa).

This sequence belongs to the phenol-soluble modulin alpha peptides family.

In terms of biological role, peptide which can recruit, activate and subsequently lyse neutrophils, thus eliminating the main cellular defense against infection. The polypeptide is Phenol-soluble modulin alpha 4 peptide (psmA4) (Staphylococcus aureus (strain bovine RF122 / ET3-1)).